The chain runs to 83 residues: Alpha-neurotoxin NTX-1 (83 aa).

The N-terminal stretch at 1 to 21 (MKTLLLTLLVVTIVCLDLGYT) is a signal peptide. Disulfide bonds link Cys-24/Cys-45, Cys-38/Cys-62, Cys-64/Cys-75, and Cys-76/Cys-81.

The protein belongs to the three-finger toxin family. Short-chain subfamily. Type I alpha-neurotoxin sub-subfamily. As to expression, expressed by the venom gland.

The protein localises to the secreted. Its function is as follows. Binds to muscle nicotinic acetylcholine receptor (nAChR) and inhibit acetylcholine from binding to the receptor, thereby impairing neuromuscular transmission. The sequence is that of Alpha-neurotoxin NTX-1 from Naja sputatrix (Malayan spitting cobra).